The sequence spans 499 residues: Cytochrome P450 81Q32 (499 aa).

Residues 5 to 25 traverse the membrane as a helical segment; sequence TLLYTFLAVVLLSISLKLFPV. 3 N-linked (GlcNAc...) asparagine glycosylation sites follow: Asn112, Asn183, and Asn266. Cys434 provides a ligand contact to heme.

It belongs to the cytochrome P450 family. In terms of tissue distribution, expressed in leaf epidermis and in the leaf internal phloem-associated parenchyma (IPAP) inside the mesophyll.

It is found in the membrane. The chain is Cytochrome P450 81Q32 from Catharanthus roseus (Madagascar periwinkle).